Here is a 367-residue protein sequence, read N- to C-terminus: MSANGSSVAQLLWQPPVCRSWKPDVEGAVYHLANCFLLMGFMAGSGVYGCFYLFGILGPGYLCCVLWGWFDACGLDIVLWNVLLTVACLLQLAQLVYRVRVNTLPEEFNLLYRTLCLPLQVPLQVYKEIVHCCHEQVLTLATEQTYAVEGETPINRLSLLLSGRVRVSQDGQFLHYIFPYQFMDSPEWESLHPSEEGTFQVTLTAETECSYISWPRKNLYLLLNRERYISRLFSALLGYDISEKLYTLNDKLFAKFGLRFDIRLPSLYHVLSPSASDGEPESEKDDEEALEAAVSPAQARPICIVPTPPCSAPPATTNFPVPLPRARMPRMPRPDSGNLASRRPLQNSSQVMSRSQAPLAPIHTPEL.

An N-linked (GlcNAc...) asparagine glycan is attached at N4. 2 helical membrane passes run 36-56 and 77-97; these read FLLM…LFGI and IVLW…QLVY. 2 disordered regions span residues 273–292 and 312–367; these read PSAS…ALEA and APPA…TPEL. Over residues 278–290 the composition is skewed to acidic residues; it reads GEPESEKDDEEAL. Residues 344-356 are compositionally biased toward polar residues; it reads PLQNSSQVMSRSQ. N347 carries N-linked (GlcNAc...) asparagine glycosylation. At T364 the chain carries Phosphothreonine.

Belongs to the popeye family. In terms of tissue distribution, expressed in the developing and adult heart, with high expression levels in the sinus and atrioventricular nodes. Also expressed in the bladder and skeletal muscle.

The protein localises to the membrane. It is found in the cell membrane. The protein resides in the sarcolemma. Its function is as follows. Important for the maintenance of cardiac function. Plays a regulatory function in heart rate dynamics mediated, at least in part, through cAMP-binding and, probably, by increasing cell surface expression of the potassium channel KCNK2 and enhancing current density. This is Popeye domain-containing protein 2 (Popdc2) from Mus musculus (Mouse).